The chain runs to 311 residues: Lipoyl synthase (311 aa).

Residues cysteine 58, cysteine 63, cysteine 69, cysteine 84, cysteine 88, cysteine 91, and serine 298 each coordinate [4Fe-4S] cluster. A Radical SAM core domain is found at 70–287; it reads FGHGTATFMI…EQEALAMGFR (218 aa).

This sequence belongs to the radical SAM superfamily. Lipoyl synthase family. Requires [4Fe-4S] cluster as cofactor.

It is found in the cytoplasm. It carries out the reaction [[Fe-S] cluster scaffold protein carrying a second [4Fe-4S](2+) cluster] + N(6)-octanoyl-L-lysyl-[protein] + 2 oxidized [2Fe-2S]-[ferredoxin] + 2 S-adenosyl-L-methionine + 4 H(+) = [[Fe-S] cluster scaffold protein] + N(6)-[(R)-dihydrolipoyl]-L-lysyl-[protein] + 4 Fe(3+) + 2 hydrogen sulfide + 2 5'-deoxyadenosine + 2 L-methionine + 2 reduced [2Fe-2S]-[ferredoxin]. The protein operates within protein modification; protein lipoylation via endogenous pathway; protein N(6)-(lipoyl)lysine from octanoyl-[acyl-carrier-protein]: step 2/2. Functionally, catalyzes the radical-mediated insertion of two sulfur atoms into the C-6 and C-8 positions of the octanoyl moiety bound to the lipoyl domains of lipoate-dependent enzymes, thereby converting the octanoylated domains into lipoylated derivatives. The protein is Lipoyl synthase of Thiobacillus denitrificans (strain ATCC 25259 / T1).